A 635-amino-acid polypeptide reads, in one-letter code: Threonine--tRNA ligase (635 aa).

Residues 1-61 (MPVIRLPDGS…TDDADLSIIT (61 aa)) enclose the TGS domain. Residues 242-533 (DHRKLGRQLD…LIENYAGAMP (292 aa)) form a catalytic region. Zn(2+) is bound by residues C333, H384, and H510.

It belongs to the class-II aminoacyl-tRNA synthetase family. In terms of assembly, homodimer. Zn(2+) serves as cofactor.

Its subcellular location is the cytoplasm. The enzyme catalyses tRNA(Thr) + L-threonine + ATP = L-threonyl-tRNA(Thr) + AMP + diphosphate + H(+). Its function is as follows. Catalyzes the attachment of threonine to tRNA(Thr) in a two-step reaction: L-threonine is first activated by ATP to form Thr-AMP and then transferred to the acceptor end of tRNA(Thr). Also edits incorrectly charged L-seryl-tRNA(Thr). The chain is Threonine--tRNA ligase from Methylobacillus flagellatus (strain ATCC 51484 / DSM 6875 / VKM B-1610 / KT).